Reading from the N-terminus, the 391-residue chain is Digeranylgeranylglycerophospholipid reductase (391 aa).

FAD contacts are provided by glycine 13, glutamate 32, cysteine 43, alanine 44, glycine 46, arginine 97, alanine 121, aspartate 277, glycine 289, and isoleucine 290.

This sequence belongs to the geranylgeranyl reductase family. DGGGPL reductase subfamily. FAD serves as cofactor.

The catalysed reaction is a 2,3-bis-O-phytanyl-sn-glycerol 1-phospholipid + 8 oxidized 2[4Fe-4S]-[ferredoxin] = a 2,3-bis-O-(geranylgeranyl)-sn-glycerol 1-phospholipid + 8 reduced 2[4Fe-4S]-[ferredoxin] + 16 H(+). It carries out the reaction 2,3-bis-O-(phytanyl)-sn-glycerol 1-phosphate + 8 oxidized 2[4Fe-4S]-[ferredoxin] = 2,3-bis-O-(geranylgeranyl)-sn-glycerol 1-phosphate + 8 reduced 2[4Fe-4S]-[ferredoxin] + 16 H(+). It catalyses the reaction a 2,3-bis-O-phytanyl-sn-glycerol 1-phospholipid + 8 A = a 2,3-bis-O-(geranylgeranyl)-sn-glycerol 1-phospholipid + 8 AH2. The enzyme catalyses CDP-2,3-bis-O-(geranylgeranyl)-sn-glycerol + 8 AH2 = CDP-2,3-bis-O-(phytanyl)-sn-glycerol + 8 A. The catalysed reaction is archaetidylserine + 8 AH2 = 2,3-bis-O-phytanyl-sn-glycero-3-phospho-L-serine + 8 A. It participates in membrane lipid metabolism; glycerophospholipid metabolism. Functionally, is involved in the reduction of 2,3-digeranylgeranylglycerophospholipids (unsaturated archaeols) into 2,3-diphytanylglycerophospholipids (saturated archaeols) in the biosynthesis of archaeal membrane lipids. Catalyzes the formation of archaetidic acid (2,3-di-O-phytanyl-sn-glyceryl phosphate) from 2,3-di-O-geranylgeranylglyceryl phosphate (DGGGP) via the hydrogenation of each double bond of the isoprenoid chains. Is also probably able to reduce double bonds of geranyl groups in CDP-2,3-bis-O-(geranylgeranyl)-sn-glycerol and archaetidylserine, thus acting at various stages in the biosynthesis of archaeal membrane lipids. The protein is Digeranylgeranylglycerophospholipid reductase of Methanothrix thermoacetophila (strain DSM 6194 / JCM 14653 / NBRC 101360 / PT) (Methanosaeta thermophila).